The sequence spans 252 residues: 2-succinyl-6-hydroxy-2,4-cyclohexadiene-1-carboxylate synthase (252 aa).

This sequence belongs to the AB hydrolase superfamily. MenH family. Monomer.

It carries out the reaction 5-enolpyruvoyl-6-hydroxy-2-succinyl-cyclohex-3-ene-1-carboxylate = (1R,6R)-6-hydroxy-2-succinyl-cyclohexa-2,4-diene-1-carboxylate + pyruvate. The protein operates within quinol/quinone metabolism; 1,4-dihydroxy-2-naphthoate biosynthesis; 1,4-dihydroxy-2-naphthoate from chorismate: step 3/7. It functions in the pathway quinol/quinone metabolism; menaquinone biosynthesis. In terms of biological role, catalyzes a proton abstraction reaction that results in 2,5-elimination of pyruvate from 2-succinyl-5-enolpyruvyl-6-hydroxy-3-cyclohexene-1-carboxylate (SEPHCHC) and the formation of 2-succinyl-6-hydroxy-2,4-cyclohexadiene-1-carboxylate (SHCHC). The sequence is that of 2-succinyl-6-hydroxy-2,4-cyclohexadiene-1-carboxylate synthase from Escherichia coli (strain SMS-3-5 / SECEC).